Consider the following 419-residue polypeptide: Chaperone protein dnaJ 2 (419 aa).

The J domain occupies 14-75; that stretch reads KFYEILGVPK…EKREIYDQYG (62 aa). The CR-type zinc-finger motif lies at 136–220; that stretch reads GTTKKLSLSR…CKGEKVVSEK (85 aa). Zn(2+) is bound by residues Cys-149, Cys-152, Cys-165, Cys-168, Cys-192, Cys-195, Cys-208, and Cys-211. CXXCXGXG motif repeat units follow at residues 149–156, 165–172, 192–199, and 208–215; these read CSKCNGKG, CGGCQGSG, CNDCKGTG, and CPQCKGEK. A compositionally biased stretch (basic and acidic residues) spans 378 to 391; it reads TTLHDVNIEDEMKR. Residues 378-419 form a disordered region; the sequence is TTLHDVNIEDEMKRKAQAQREAYDDDEEDHPGGAQRVQCAQQ. At Cys-416 the chain carries Cysteine methyl ester. The S-farnesyl cysteine moiety is linked to residue Cys-416. Residues 417–419 constitute a propeptide, removed in mature form; that stretch reads AQQ.

This sequence belongs to the DnaJ family. A/I subfamily. As to quaternary structure, homodimer. Zn(2+) is required as a cofactor. In terms of processing, farnesylated. Expressed in both etiolated and light-grown tissues.

It is found in the membrane. Functionally, plays a continuous role in plant development probably in the structural organization of compartments. This chain is Chaperone protein dnaJ 2 (ATJ2), found in Arabidopsis thaliana (Mouse-ear cress).